The following is a 277-amino-acid chain: Putative hydro-lyase SCO1412 (277 aa).

The protein belongs to the D-glutamate cyclase family.

This is Putative hydro-lyase SCO1412 from Streptomyces coelicolor (strain ATCC BAA-471 / A3(2) / M145).